The chain runs to 37 residues: Cytochrome b6-f complex subunit 5 (37 aa).

The chain crosses the membrane as a helical span at residues 5 to 25 (LLSGIVLGLIPVTLAGLFVTA).

Belongs to the PetG family. In terms of assembly, the 4 large subunits of the cytochrome b6-f complex are cytochrome b6, subunit IV (17 kDa polypeptide, PetD), cytochrome f and the Rieske protein, while the 4 small subunits are PetG, PetL, PetM and PetN. The complex functions as a dimer.

It localises to the plastid. Its subcellular location is the chloroplast thylakoid membrane. Component of the cytochrome b6-f complex, which mediates electron transfer between photosystem II (PSII) and photosystem I (PSI), cyclic electron flow around PSI, and state transitions. PetG is required for either the stability or assembly of the cytochrome b6-f complex. The protein is Cytochrome b6-f complex subunit 5 of Chlorokybus atmophyticus (Soil alga).